The chain runs to 492 residues: N-succinylglutamate 5-semialdehyde dehydrogenase (492 aa).

220–225 (GSASTG) is a binding site for NAD(+). Residues E243 and C277 contribute to the active site.

It belongs to the aldehyde dehydrogenase family. AstD subfamily.

The enzyme catalyses N-succinyl-L-glutamate 5-semialdehyde + NAD(+) + H2O = N-succinyl-L-glutamate + NADH + 2 H(+). It functions in the pathway amino-acid degradation; L-arginine degradation via AST pathway; L-glutamate and succinate from L-arginine: step 4/5. Catalyzes the NAD-dependent reduction of succinylglutamate semialdehyde into succinylglutamate. In Salmonella typhimurium (strain LT2 / SGSC1412 / ATCC 700720), this protein is N-succinylglutamate 5-semialdehyde dehydrogenase.